Reading from the N-terminus, the 861-residue chain is Putative glutamate--cysteine ligase 2-2 (861 aa).

A carboxylate-amine ligase region spans residues 1–372; that stretch reads MSDARIVAVG…RDVPPAGAAA (372 aa). The segment at 373–861 is unknown; sequence ALGSAPAVSA…GSKDTWIPRR (489 aa).

It in the N-terminal section; belongs to the glutamate--cysteine ligase type 2 family. YbdK subfamily.

The enzyme catalyses L-cysteine + L-glutamate + ATP = gamma-L-glutamyl-L-cysteine + ADP + phosphate + H(+). In terms of biological role, ATP-dependent carboxylate-amine ligase which exhibits weak glutamate--cysteine ligase activity. The chain is Putative glutamate--cysteine ligase 2-2 from Frankia casuarinae (strain DSM 45818 / CECT 9043 / HFP020203 / CcI3).